A 507-amino-acid chain; its full sequence is MHKKVLLAILDGYGISNAIYGNAVQNANTPMLDELINSYPCVLLDASGEAVGLPMGQIGNSEVGHLNIGAGRVVYTGLSLINQHIKDRSFFANKAFLKTIEHVEKNHSKIHLIGLFSNGGVHSHNEHLLALIELFSKHAKVVLHLFGDGRDVAPCSLKQDLEKLMIFLKNYPNVVIGTIGGRYYGMDRDQRWDREMIAYKALLGVSKNKFNDPIGYIETQYQNQITDEFIYPAINANLNSDQFALNNNDGVIFFNFRPDRARQMSHLIFNSNYYNYQPELKRKENLFFVTMMNYEGIVPSEFAFPPQTIKNSLGEVIANNNLKQLRIAETEKYAHVTFFFDGGFEVNLSNETKTLIPSLKVATYDLAPEMSCKAITDALLEKLNNFDFTVLNFANPDMVGHTGNYQACIKALEALDVQIKRIVDFCKANQITMFLTADHGNAEVMIDNNNNPVTKHTINPVPFVCTDKNVNFNQTGILANIAPTILEYLNLSKPKEMTAKSLLKNNN.

2 residues coordinate Mn(2+): Asp-11 and Ser-61. Residue Ser-61 is the Phosphoserine intermediate of the active site. Residues His-122, 150-151 (RD), Arg-182, Arg-188, 257-260 (RPDR), and Lys-332 each bind substrate. 5 residues coordinate Mn(2+): Asp-397, His-401, Asp-438, His-439, and His-456.

It belongs to the BPG-independent phosphoglycerate mutase family. In terms of assembly, monomer. Mn(2+) serves as cofactor.

The catalysed reaction is (2R)-2-phosphoglycerate = (2R)-3-phosphoglycerate. It functions in the pathway carbohydrate degradation; glycolysis; pyruvate from D-glyceraldehyde 3-phosphate: step 3/5. Catalyzes the interconversion of 2-phosphoglycerate and 3-phosphoglycerate. This chain is 2,3-bisphosphoglycerate-independent phosphoglycerate mutase, found in Mycoplasma genitalium (strain ATCC 33530 / DSM 19775 / NCTC 10195 / G37) (Mycoplasmoides genitalium).